The primary structure comprises 163 residues: Lysosomal enzyme trafficking factor (163 aa).

The next 2 helical transmembrane spans lie at 40–60 (MGWI…YYVF) and 98–118 (LPFW…FLFL).

This sequence belongs to the LYSET family. Interacts with GNPTAB; this interaction is important for proper localization of GNPTAB in Golgi stacks. Interacts with MBTPS1.

It is found in the golgi apparatus membrane. In terms of biological role, required for mannose-6-phosphate-dependent trafficking of lysosomal enzymes. LYSET bridges GlcNAc-1-phosphate transferase (GNPTAB), to the membrane-bound transcription factor site-1 protease (MBTPS1), thus allowing proteolytic activation of the GNPTAB. GNPTAB is involved in the regulation of M6P-dependent Golgi-to-lysosome trafficking of lysosomal enzymes. LYSET is thus an essential factor for maturation and delivery of lysosomal hydrolases. Plays an essential function for cells that depend on lysosomal catabolism to generate nutrients. The sequence is that of Lysosomal enzyme trafficking factor (Lyset) from Mus musculus (Mouse).